The sequence spans 428 residues: Enolase (428 aa).

Residue Gln162 coordinates (2R)-2-phosphoglycerate. Glu204 serves as the catalytic Proton donor. Mg(2+)-binding residues include Asp241, Glu286, and Asp313. (2R)-2-phosphoglycerate contacts are provided by Lys338, Arg367, Ser368, and Lys389. Lys338 serves as the catalytic Proton acceptor.

It belongs to the enolase family. As to quaternary structure, component of the RNA degradosome, a multiprotein complex involved in RNA processing and mRNA degradation. It depends on Mg(2+) as a cofactor.

The protein resides in the cytoplasm. It localises to the secreted. The protein localises to the cell surface. The catalysed reaction is (2R)-2-phosphoglycerate = phosphoenolpyruvate + H2O. It participates in carbohydrate degradation; glycolysis; pyruvate from D-glyceraldehyde 3-phosphate: step 4/5. Catalyzes the reversible conversion of 2-phosphoglycerate (2-PG) into phosphoenolpyruvate (PEP). It is essential for the degradation of carbohydrates via glycolysis. This Vesicomyosocius okutanii subsp. Calyptogena okutanii (strain HA) protein is Enolase.